Reading from the N-terminus, the 72-residue chain is Large ribosomal subunit protein uL29 (72 aa).

This sequence belongs to the universal ribosomal protein uL29 family.

This is Large ribosomal subunit protein uL29 from Caldicellulosiruptor bescii (strain ATCC BAA-1888 / DSM 6725 / KCTC 15123 / Z-1320) (Anaerocellum thermophilum).